Consider the following 218-residue polypeptide: uncharacterized protein (218 aa).

A disordered region spans residues 1–24 (MAAQPQAPSAGGRPRAGKAVKSVA). In terms of domain architecture, HTH tetR-type spans 28-88 (KLSRESIVEG…AVRIRVIDDI (61 aa)). Residues 51-70 (TINALATQLGTKGPSLYNHV) constitute a DNA-binding region (H-T-H motif). Thr57 is subject to Phosphothreonine; by PknH.

Phosphorylated on Thr-57 by PknH.

This is an uncharacterized protein from Mycobacterium tuberculosis (strain ATCC 25618 / H37Rv).